A 204-amino-acid polypeptide reads, in one-letter code: Pyridoxal 5'-phosphate synthase subunit PdxT (204 aa).

Position 52–54 (52–54 (GES)) interacts with L-glutamine. Cys-84 functions as the Nucleophile in the catalytic mechanism. Residues Arg-116 and 143 to 144 (IR) each bind L-glutamine. Active-site charge relay system residues include His-184 and Glu-186.

It belongs to the glutaminase PdxT/SNO family. In terms of assembly, in the presence of PdxS, forms a dodecamer of heterodimers. Only shows activity in the heterodimer.

It catalyses the reaction aldehydo-D-ribose 5-phosphate + D-glyceraldehyde 3-phosphate + L-glutamine = pyridoxal 5'-phosphate + L-glutamate + phosphate + 3 H2O + H(+). It carries out the reaction L-glutamine + H2O = L-glutamate + NH4(+). Its pathway is cofactor biosynthesis; pyridoxal 5'-phosphate biosynthesis. Its function is as follows. Catalyzes the hydrolysis of glutamine to glutamate and ammonia as part of the biosynthesis of pyridoxal 5'-phosphate. The resulting ammonia molecule is channeled to the active site of PdxS. The polypeptide is Pyridoxal 5'-phosphate synthase subunit PdxT (Pyrobaculum aerophilum (strain ATCC 51768 / DSM 7523 / JCM 9630 / CIP 104966 / NBRC 100827 / IM2)).